Reading from the N-terminus, the 959-residue chain is Oxysterol-binding protein-related protein 6 (959 aa).

The disordered stretch occupies residues 1–60; sequence MSSDEKGISPAHKTSTPTHRSASSSTSSQRESRQSIHVLERTASSSTEPSVSRQLLEPEP. N-acetylserine is present on Ser2. The segment covering 14–29 has biased composition (low complexity); that stretch reads TSTPTHRSASSSTSSQ. Basic and acidic residues predominate over residues 30–40; sequence RESRQSIHVLE. Ser35 is modified (phosphoserine). Positions 42 to 53 are enriched in polar residues; sequence TASSSTEPSVSR. The PH domain maps to 86–181; that stretch reads PDRHEGFMLK…WVSKLRHHRL (96 aa). Phosphoserine is present on residues Ser190 and Ser290.

It belongs to the OSBP family. As to quaternary structure, homodimer. Interacts with OSBPL3. As to expression, expressed in skin, respiratory epithelium, small intestine epithelium, pancreas, striated muscle, brain, spinal ganglia, and nervous plexus of the intestine (at protein level). In the brain, specifically in the cerebellum, it is expressed in Purkinje and granule cells. Expressed in hepatocytes and macrophages.

It is found in the nucleus envelope. The protein resides in the cytoplasm. It localises to the cytosol. The protein localises to the endoplasmic reticulum membrane. Its subcellular location is the cell membrane. It is found in the endosome membrane. Functionally, regulates cellular transport and efflux of cholesterol. Plays a role in phosphatidylinositol-4-phophate (PI4P) turnover at the neuronal membrane. Binds via its PH domain PI4P, phosphatidylinositol-4,5-diphosphate, phosphatidylinositol-3,4,5-triphosphate, and phosphatidic acid. Weakly binds 25-hydroxycholesterol. The polypeptide is Oxysterol-binding protein-related protein 6 (Osbpl6) (Mus musculus (Mouse)).